The following is a 216-amino-acid chain: Thiamine-phosphate synthase (216 aa).

4-amino-2-methyl-5-(diphosphooxymethyl)pyrimidine-binding positions include 41–45 and N73; that span reads QYREK. Mg(2+) contacts are provided by D74 and D93. A 4-amino-2-methyl-5-(diphosphooxymethyl)pyrimidine-binding site is contributed by S111. 2-[(2R,5Z)-2-carboxy-4-methylthiazol-5(2H)-ylidene]ethyl phosphate is bound at residue 137–139; the sequence is TTT. Residue K140 participates in 4-amino-2-methyl-5-(diphosphooxymethyl)pyrimidine binding. Residues G168 and 188–189 each bind 2-[(2R,5Z)-2-carboxy-4-methylthiazol-5(2H)-ylidene]ethyl phosphate; that span reads VS.

It belongs to the thiamine-phosphate synthase family. Requires Mg(2+) as cofactor.

The catalysed reaction is 2-[(2R,5Z)-2-carboxy-4-methylthiazol-5(2H)-ylidene]ethyl phosphate + 4-amino-2-methyl-5-(diphosphooxymethyl)pyrimidine + 2 H(+) = thiamine phosphate + CO2 + diphosphate. The enzyme catalyses 2-(2-carboxy-4-methylthiazol-5-yl)ethyl phosphate + 4-amino-2-methyl-5-(diphosphooxymethyl)pyrimidine + 2 H(+) = thiamine phosphate + CO2 + diphosphate. It catalyses the reaction 4-methyl-5-(2-phosphooxyethyl)-thiazole + 4-amino-2-methyl-5-(diphosphooxymethyl)pyrimidine + H(+) = thiamine phosphate + diphosphate. It functions in the pathway cofactor biosynthesis; thiamine diphosphate biosynthesis; thiamine phosphate from 4-amino-2-methyl-5-diphosphomethylpyrimidine and 4-methyl-5-(2-phosphoethyl)-thiazole: step 1/1. Condenses 4-methyl-5-(beta-hydroxyethyl)thiazole monophosphate (THZ-P) and 2-methyl-4-amino-5-hydroxymethyl pyrimidine pyrophosphate (HMP-PP) to form thiamine monophosphate (TMP). The sequence is that of Thiamine-phosphate synthase from Chloroflexus aurantiacus (strain ATCC 29366 / DSM 635 / J-10-fl).